Reading from the N-terminus, the 422-residue chain is uncharacterized protein (422 aa).

Disordered stretches follow at residues Met1 to Asp21, Thr158 to Val218, and Asp246 to Thr271. The segment covering Ala11–Asp21 has biased composition (polar residues). Residues Ser170–Ala199 are compositionally biased toward low complexity. 2 stretches are compositionally biased toward polar residues: residues Gly205–Glu216 and Ala250–Gly261. Low complexity predominate over residues Thr262–Thr271.

The protein belongs to the adhesin P1 family.

This is an uncharacterized protein from Mycoplasma pneumoniae (strain ATCC 29342 / M129 / Subtype 1) (Mycoplasmoides pneumoniae).